We begin with the raw amino-acid sequence, 131 residues long: Acidic leucine-rich nuclear phosphoprotein 32 family member D (131 aa).

LRR repeat units lie at residues 18–38 (DVKE…EGLT), 43–64 (ELEL…PKLN), 65–87 (KLKK…AEKC), 89–110 (NLIH…EPLK), and 114–131 (NLES…LNNY).

This sequence belongs to the ANP32 family.

This chain is Acidic leucine-rich nuclear phosphoprotein 32 family member D (ANP32D), found in Homo sapiens (Human).